The chain runs to 332 residues: Peroxidase C1C (332 aa).

Residues 1-9 form the signal peptide; sequence MLHASFSNA. Gln10 bears the Pyrrolidone carboxylic acid mark. Cystine bridges form between Cys20/Cys100, Cys53/Cys58, Cys106/Cys310, and Cys186/Cys218. The N-linked (GlcNAc...) asparagine glycan is linked to Asn22. The Proton acceptor role is filled by His51. The Ca(2+) site is built by Asp52, Val55, Gly57, Asp59, and Ser61. N-linked (GlcNAc...) asparagine glycosylation is present at Asn66. Pro148 lines the substrate pocket. Residue His179 participates in heme b binding. Ca(2+) is bound at residue Thr180. 3 N-linked (GlcNAc...) asparagine glycosylation sites follow: Asn195, Asn207, and Asn223. 3 residues coordinate Ca(2+): Asp231, Thr234, and Asp239. N-linked (GlcNAc...) asparagine glycosylation occurs at Asn264.

Belongs to the peroxidase family. Classical plant (class III) peroxidase subfamily. The cofactor is Ca(2+). It depends on heme b as a cofactor.

It localises to the secreted. It is found in the vacuole. The enzyme catalyses 2 a phenolic donor + H2O2 = 2 a phenolic radical donor + 2 H2O. Its function is as follows. Removal of H(2)O(2), oxidation of toxic reductants, biosynthesis and degradation of lignin, suberization, auxin catabolism, response to environmental stresses such as wounding, pathogen attack and oxidative stress. These functions might be dependent on each isozyme/isoform in each plant tissue. The protein is Peroxidase C1C (PRXC1C) of Armoracia rusticana (Horseradish).